Reading from the N-terminus, the 595-residue chain is MTQQNAPKDLPPLSAEQLDRLQAISSDLSNLQLAWASGYLWNKASHSIPIDYTASQQVITVLSASQTGNARRLAVQLYEDLLAAQLSVVIINAGDYKFKQIAQEKWLLIVTSTQGDGDPPEEAIALYKYLFSKKAPVLNNIQFAIFGLGDSSYTYFAKIGKDFDSRLAELGAQRLYDRVDADVDYQEKADIWRREIVKILQTKLVTVNAKQQLSVINNRIEVKNNLYTKEEPFTAHLVVKQKITSRSSKKDIRHLEIDIAGSGLNYQPGDALGVWYENDPVLISEILELLGLTGNELVQVKEKNIPLNEALQKHYELTNNTAEIVKSYAYITRNSSLLALVDDQQQLKQFAFSTPFIDMIQRIPVELHPKQLLTLLRPLMPRLYSIASSQAEVGDEVHLTVSVVRYEIDGKIRTGGASSYLAYRLQESEPIRVFIEHNDNFRLPNNPNTAIIMIGSGTGIAPFRGFMQQREATTAKGKNWLFFGNQHLTDDFLYQVEWQRYIKNGLLNKIDVAWSQDQNKKIYVQDRLLEKGIELWNWIQDGAHIYVCGNANLMARDVEKALVKLIAIHGRMDYEQADEFLSELRIARRFQRDTY.

Residues Ile-59–Val-197 enclose the Flavodoxin-like domain. Residues Ser-65–Ala-70, Ser-112–Gly-115, and Leu-148–Ala-157 contribute to the FMN site. One can recognise an FAD-binding FR-type domain in the interval Glu-230–Pro-444. Residues Thr-318, Phe-352, Arg-382–Ser-385, Thr-400–Ser-402, Tyr-406, and Gly-415–Ser-418 contribute to the FAD site. NADP(+)-binding positions include Ser-515–Gln-516, Lys-521–Gln-525, and Asp-557. FAD is bound at residue Tyr-595.

This sequence belongs to the NADPH-dependent sulphite reductase flavoprotein subunit CysJ family. In the N-terminal section; belongs to the flavodoxin family. It in the C-terminal section; belongs to the flavoprotein pyridine nucleotide cytochrome reductase family. Alpha(8)-beta(8). The alpha component is a flavoprotein, the beta component is a hemoprotein. The cofactor is FAD. FMN serves as cofactor.

The catalysed reaction is hydrogen sulfide + 3 NADP(+) + 3 H2O = sulfite + 3 NADPH + 4 H(+). It participates in sulfur metabolism; hydrogen sulfide biosynthesis; hydrogen sulfide from sulfite (NADPH route): step 1/1. Component of the sulfite reductase complex that catalyzes the 6-electron reduction of sulfite to sulfide. This is one of several activities required for the biosynthesis of L-cysteine from sulfate. The flavoprotein component catalyzes the electron flow from NADPH -&gt; FAD -&gt; FMN to the hemoprotein component. The chain is Sulfite reductase [NADPH] flavoprotein alpha-component from Baumannia cicadellinicola subsp. Homalodisca coagulata.